The sequence spans 215 residues: Uridine kinase (215 aa).

16–23 (GASASGKS) contributes to the ATP binding site.

Belongs to the uridine kinase family.

The protein resides in the cytoplasm. It carries out the reaction uridine + ATP = UMP + ADP + H(+). The enzyme catalyses cytidine + ATP = CMP + ADP + H(+). It participates in pyrimidine metabolism; CTP biosynthesis via salvage pathway; CTP from cytidine: step 1/3. It functions in the pathway pyrimidine metabolism; UMP biosynthesis via salvage pathway; UMP from uridine: step 1/1. The polypeptide is Uridine kinase (Aliivibrio salmonicida (strain LFI1238) (Vibrio salmonicida (strain LFI1238))).